A 259-amino-acid polypeptide reads, in one-letter code: Phosphate import ATP-binding protein PstB (259 aa).

Residues Ile13 to Ile254 form the ABC transporter domain. Gly45–Ser52 lines the ATP pocket.

This sequence belongs to the ABC transporter superfamily. Phosphate importer (TC 3.A.1.7) family. The complex is composed of two ATP-binding proteins (PstB), two transmembrane proteins (PstC and PstA) and a solute-binding protein (PstS).

The protein localises to the cell inner membrane. The catalysed reaction is phosphate(out) + ATP + H2O = ADP + 2 phosphate(in) + H(+). In terms of biological role, part of the ABC transporter complex PstSACB involved in phosphate import. Responsible for energy coupling to the transport system. This Albidiferax ferrireducens (strain ATCC BAA-621 / DSM 15236 / T118) (Rhodoferax ferrireducens) protein is Phosphate import ATP-binding protein PstB.